A 615-amino-acid chain; its full sequence is Extracellular metalloproteinase 1 (615 aa).

The N-terminal stretch at 1 to 8 is a signal peptide; the sequence is SLPLHVLA. Positions 9-235 are excised as a propeptide; the sequence is HPQPSTSTSL…VHNVVDYVAH (227 aa). N-linked (GlcNAc...) asparagine glycosylation occurs at asparagine 276. Histidine 419 provides a ligand contact to Zn(2+). Residue glutamate 420 is part of the active site. Residue histidine 423 participates in Zn(2+) binding. 3 N-linked (GlcNAc...) asparagine glycosylation sites follow: asparagine 464, asparagine 583, and asparagine 612.

This sequence belongs to the peptidase M36 family. Zn(2+) is required as a cofactor.

The protein localises to the secreted. Its function is as follows. Secreted metalloproteinase probably acting as a virulence factor. The protein is Extracellular metalloproteinase 1 (MEP1) of Trichophyton equinum (Horse ringworm fungus).